The chain runs to 81 residues: Cytochrome c oxidase subunit 7B2, mitochondrial (81 aa).

The transit peptide at 1 to 25 directs the protein to the mitochondrion; the sequence is MMFPLARNALSSLKIRSILQSMARQ. Residues 26–33 are Mitochondrial matrix-facing; it reads SHVKHSPD. Residues 34-60 form a helical membrane-spanning segment; sequence FHDKYGNAVLASGTAFCVVAWVFTATQ. Over 61-81 the chain is Mitochondrial intermembrane; the sequence is IGIEWNLSPVGRVTPKEWKHQ.

This sequence belongs to the cytochrome c oxidase VIIb family. Component of the cytochrome c oxidase (complex IV, CIV), a multisubunit enzyme composed of 14 subunits. The complex is composed of a catalytic core of 3 subunits MT-CO1, MT-CO2 and MT-CO3, encoded in the mitochondrial DNA, and 11 supernumerary subunits COX4I, COX5A, COX5B, COX6A, COX6B, COX6C, COX7A, COX7B, COX7C, COX8 and NDUFA4, which are encoded in the nuclear genome. The complex exists as a monomer or a dimer and forms supercomplexes (SCs) in the inner mitochondrial membrane with NADH-ubiquinone oxidoreductase (complex I, CI) and ubiquinol-cytochrome c oxidoreductase (cytochrome b-c1 complex, complex III, CIII), resulting in different assemblies (supercomplex SCI(1)III(2)IV(1) and megacomplex MCI(2)III(2)IV(2)).

The protein localises to the mitochondrion inner membrane. It functions in the pathway energy metabolism; oxidative phosphorylation. Its function is as follows. Component of the cytochrome c oxidase, the last enzyme in the mitochondrial electron transport chain which drives oxidative phosphorylation. The respiratory chain contains 3 multisubunit complexes succinate dehydrogenase (complex II, CII), ubiquinol-cytochrome c oxidoreductase (cytochrome b-c1 complex, complex III, CIII) and cytochrome c oxidase (complex IV, CIV), that cooperate to transfer electrons derived from NADH and succinate to molecular oxygen, creating an electrochemical gradient over the inner membrane that drives transmembrane transport and the ATP synthase. Cytochrome c oxidase is the component of the respiratory chain that catalyzes the reduction of oxygen to water. Electrons originating from reduced cytochrome c in the intermembrane space (IMS) are transferred via the dinuclear copper A center (CU(A)) of subunit 2 and heme A of subunit 1 to the active site in subunit 1, a binuclear center (BNC) formed by heme A3 and copper B (CU(B)). The BNC reduces molecular oxygen to 2 water molecules using 4 electrons from cytochrome c in the IMS and 4 protons from the mitochondrial matrix. In Macaca fascicularis (Crab-eating macaque), this protein is Cytochrome c oxidase subunit 7B2, mitochondrial (COX7B2).